Here is a 274-residue protein sequence, read N- to C-terminus: 2,3,4,5-tetrahydropyridine-2,6-dicarboxylate N-succinyltransferase (274 aa).

Arg-106 and Asp-143 together coordinate substrate.

It belongs to the transferase hexapeptide repeat family. Homotrimer.

It is found in the cytoplasm. It catalyses the reaction (S)-2,3,4,5-tetrahydrodipicolinate + succinyl-CoA + H2O = (S)-2-succinylamino-6-oxoheptanedioate + CoA. It functions in the pathway amino-acid biosynthesis; L-lysine biosynthesis via DAP pathway; LL-2,6-diaminopimelate from (S)-tetrahydrodipicolinate (succinylase route): step 1/3. The polypeptide is 2,3,4,5-tetrahydropyridine-2,6-dicarboxylate N-succinyltransferase (Rickettsia rickettsii (strain Sheila Smith)).